The primary structure comprises 361 residues: MEDSGNSSGSEASRSGSEERRPVRERLGSRPPERRPVRARLGAIRRRRGGRGGRAARQALRQRRRQQQQQQRQQQHQRRRQEADRPDGGPDAPPDRLSESARAAVSATHARVGATRVNELFASARHDLSRPVFNDGFRAAGSSPWAAVLEFGAEQFTPDGRRVTWETLMFHGADLHRLFEVRPHATEAARVLREMVLLNEGLTESLASADETLTWVKLILTKGLTLRTLDPIVATAGAVLQNLRLKLGPFLRCYLRDTPVDELVRRRRLRDVRCIVTYTLVMLARIARVVERGSSCVLPEDLGDSPVPLEEYVPGACLGGIMDALDSHKTGCDAPTCRLTCSYTLVPVYMHGKYFYCNHLF.

The span at 1-15 (MEDSGNSSGSEASRS) shows a compositional bias: low complexity. Residues 1-107 (MEDSGNSSGS…SESARAAVSA (107 aa)) form a disordered region. Positions 16-36 (GSEERRPVRERLGSRPPERRP) are enriched in basic and acidic residues. Residues 45–54 (RRRRGGRGGR) form an RGG-box region. The span at 80 to 99 (RQEADRPDGGPDAPPDRLSE) shows a compositional bias: basic and acidic residues. Cys253, His328, Cys332, and Cys337 together coordinate Zn(2+). The CHC2-type zinc-finger motif lies at 253-337 (CYLRDTPVDE…HKTGCDAPTC (85 aa)).

It belongs to the HHV-1 ICP27 protein family. In terms of assembly, homodimer. Homodimerization is required for transactivation. Associates in a complex with RNA, and host export factors NXF1/TAP and ALYREF; these interactions allow nuclear export of viral transcripts. Interacts with three host shuttling SR proteins SRSF1, SRSF3 and SRSF7. Interacts with host SRPK1. Interacts with IE62; this interaction enhances IE62 transactivation.

The protein localises to the host cytoplasm. The protein resides in the host nucleus. Functionally, multifunctional regulator of the expression of viral genes that mediates nuclear export of viral intronless mRNAs. This immediate early (EI) protein promotes the nuclear export of viral intronless mRNAs by interacting with mRNAs and host NXF1/TAP. This chain is mRNA export factor ICP27 homolog, found in Suid herpesvirus 1 (strain Kaplan) (SuHV-1).